A 404-amino-acid chain; its full sequence is Multidrug resistance protein MdtG (404 aa).

The next 11 membrane-spanning stretches (helical) occupy residues 19–39 (LGCF…PLYV), 56–76 (LVFS…GGLA), 90–110 (LGMA…QFLI), 113–133 (ALLG…ATQV), 144–164 (TLST…GLLA), 171–191 (PVFF…FFFI), 222–242 (LFVT…ILTL), 254–274 (IAFI…LSAP), 288–308 (ILIV…FVQT), 317–337 (FLLG…LVYN), and 376–396 (AVFC…WNSL).

The protein belongs to the major facilitator superfamily. DHA1 family. MdtG (TC 2.A.1.2.20) subfamily.

It is found in the cell inner membrane. The sequence is that of Multidrug resistance protein MdtG from Salmonella choleraesuis (strain SC-B67).